Here is a 238-residue protein sequence, read N- to C-terminus: Uridylate kinase (238 aa).

12–15 contacts ATP; the sequence is KLSG. Position 54 (glycine 54) interacts with UMP. ATP-binding residues include glycine 55 and arginine 59. Residues aspartate 74 and 135 to 142 each bind UMP; that span reads TGNPFFTT. The ATP site is built by threonine 162, asparagine 163, tyrosine 168, and aspartate 171.

This sequence belongs to the UMP kinase family. Homohexamer.

It is found in the cytoplasm. It carries out the reaction UMP + ATP = UDP + ADP. The protein operates within pyrimidine metabolism; CTP biosynthesis via de novo pathway; UDP from UMP (UMPK route): step 1/1. Inhibited by UTP. In terms of biological role, catalyzes the reversible phosphorylation of UMP to UDP. In Rhodopseudomonas palustris (strain BisB18), this protein is Uridylate kinase.